The primary structure comprises 872 residues: Coatomer subunit gamma-2 (872 aa).

HEAT repeat units follow at residues 64–101 (MEATEAFFAMTRLFQSNDQTLRRMCYLTIKEMANISED), 283–320 (RELAPAVSVLQLFCSSPKPALRYAAVRTLNKVAMKHPS), 321–355 (AVTACNLDLENLITDSNRSIATLAITTLLKTGSES), 356–392 (SVDRLMKQISTFVSEISDEFKVVVVQAISALCQKYPR), 395–430 (SVMMTFLSNMLRDDGGFEYKRAIVDCIISIIEENPD), and 467–504 (PTPSKYIRFIFNRVVLENEAVRAAAVSALAKFGAQNEP).

This sequence belongs to the COPG family. In terms of assembly, oligomeric complex.

The protein resides in the cytoplasm. It is found in the golgi apparatus membrane. It localises to the cytoplasmic vesicle. The protein localises to the COPI-coated vesicle membrane. Functionally, the coatomer is a cytosolic protein complex that binds to dilysine motifs and reversibly associates with Golgi non-clathrin-coated vesicles, which further mediate biosynthetic protein transport from the ER, via the Golgi up to the trans Golgi network. Coatomer complex is required for budding from Golgi membranes, and is essential for the retrograde Golgi-to-ER transport of dilysine-tagged proteins. The chain is Coatomer subunit gamma-2 (copg2) from Xenopus tropicalis (Western clawed frog).